The sequence spans 160 residues: Peptidyl-prolyl cis-trans isomerase CYP18-1 (160 aa).

The 151-residue stretch at 3–153 (VTLHTNLGDI…AEIRLNRVTI (151 aa)) folds into the PPIase cyclophilin-type domain.

This sequence belongs to the cyclophilin-type PPIase family. As to expression, ubiquitous.

Its subcellular location is the cytoplasm. It carries out the reaction [protein]-peptidylproline (omega=180) = [protein]-peptidylproline (omega=0). Its function is as follows. PPIases accelerate the folding of proteins. It catalyzes the cis-trans isomerization of proline imidic peptide bonds in oligopeptides. The chain is Peptidyl-prolyl cis-trans isomerase CYP18-1 (CYP18-1) from Arabidopsis thaliana (Mouse-ear cress).